Here is a 430-residue protein sequence, read N- to C-terminus: Tyrosine--tRNA ligase (430 aa).

Tyr-32 contacts L-tyrosine. Residues 37–46 carry the 'HIGH' region motif; it reads PTADSLHIGH. L-tyrosine-binding residues include Tyr-172 and Gln-176. Positions 232–236 match the 'KMSKS' region motif; that stretch reads KFGKT. Position 235 (Lys-235) interacts with ATP. The 68-residue stretch at 362-429 folds into the S4 RNA-binding domain; it reads VKAVDLFVDN…GKKNYYLIIA (68 aa).

It belongs to the class-I aminoacyl-tRNA synthetase family. TyrS type 1 subfamily. As to quaternary structure, homodimer.

Its subcellular location is the cytoplasm. The enzyme catalyses tRNA(Tyr) + L-tyrosine + ATP = L-tyrosyl-tRNA(Tyr) + AMP + diphosphate + H(+). Catalyzes the attachment of tyrosine to tRNA(Tyr) in a two-step reaction: tyrosine is first activated by ATP to form Tyr-AMP and then transferred to the acceptor end of tRNA(Tyr). This Bacteroides fragilis (strain ATCC 25285 / DSM 2151 / CCUG 4856 / JCM 11019 / LMG 10263 / NCTC 9343 / Onslow / VPI 2553 / EN-2) protein is Tyrosine--tRNA ligase.